The sequence spans 249 residues: Isoprenyl transferase (249 aa).

Residue Asp25 is part of the active site. Asp25 provides a ligand contact to Mg(2+). Residues 26–29, Trp30, Arg38, His42, and 70–72 each bind substrate; these read GNGR and STE. The Proton acceptor role is filled by Asn73. Substrate is bound by residues Trp74, Arg76, Arg197, and 203–205; that span reads RLS. Glu216 lines the Mg(2+) pocket.

Belongs to the UPP synthase family. Homodimer. Mg(2+) is required as a cofactor.

Catalyzes the condensation of isopentenyl diphosphate (IPP) with allylic pyrophosphates generating different type of terpenoids. The sequence is that of Isoprenyl transferase from Streptococcus pyogenes serotype M3 (strain ATCC BAA-595 / MGAS315).